We begin with the raw amino-acid sequence, 320 residues long: MARKKIALIGAGNIGGTLAHLAAQKELGDIVLFDVVEGVPQGKALDLSQCGPVEGFDANIIGTNDYKGIAGADVIIVTAGVARKPGMSRDDLLGINLKVMKAVGEGIRDNAPDAFVICITNPLDAMVWALREFSGLPANKVVGMAGVLDSARFSTFLAWEFGVSIRDVNTFVLGGHGDTMVPVTQYSTVNGIPVPDLVKMGLSTQEKIDAIVQRTRSGGGEIVGLLKTGSAFYAPAASGIAMAEAYLNDQKRILPCAAYVDGEYGVNGLYVGVPVLIGANGVEKVIEIELDDEAKGNLQVSVDAVKELLEACKGIDPSLA.

NAD(+)-binding positions include 10–15 (GAGNIG) and aspartate 34. Residues arginine 83 and arginine 89 each coordinate substrate. NAD(+) is bound by residues asparagine 96 and 119-121 (ITN). 2 residues coordinate substrate: asparagine 121 and arginine 152. Histidine 176 acts as the Proton acceptor in catalysis.

This sequence belongs to the LDH/MDH superfamily. MDH type 3 family.

The catalysed reaction is (S)-malate + NAD(+) = oxaloacetate + NADH + H(+). Catalyzes the reversible oxidation of malate to oxaloacetate. The sequence is that of Malate dehydrogenase from Novosphingobium aromaticivorans (strain ATCC 700278 / DSM 12444 / CCUG 56034 / CIP 105152 / NBRC 16084 / F199).